The following is a 501-amino-acid chain: Geissoschizine oxidase (501 aa).

The chain crosses the membrane as a helical span at residues 1–21; the sequence is MEFSFSSPLLYILYFLLFFIV. Residue Cys-442 participates in heme binding.

This sequence belongs to the cytochrome P450 family. Heme is required as a cofactor.

It localises to the membrane. The catalysed reaction is (19E)-geissoschizine + reduced [NADPH--hemoprotein reductase] + O2 = akuammicine + formate + oxidized [NADPH--hemoprotein reductase] + H2O + H(+). It participates in alkaloid biosynthesis. Its function is as follows. A cytochrome P450 monooxygenase involved in the biosynthesis of strychnos monoterpene indole alkaloids (MIAs) natural products, compounds with effects on glucose absorption. Catalyzes the conversion of geissoschizine to akuammicine. This Alstonia scholaris (Dogbane) protein is Geissoschizine oxidase.